Here is a 274-residue protein sequence, read N- to C-terminus: NAD kinase (274 aa).

Catalysis depends on Asp-61, which acts as the Proton acceptor. Residues Asp-61–Gly-62, Lys-66, Asn-134–Asp-135, Lys-145, Asp-164, and Thr-175–Ser-180 contribute to the NAD(+) site.

Belongs to the NAD kinase family. A divalent metal cation is required as a cofactor.

The protein localises to the cytoplasm. The enzyme catalyses NAD(+) + ATP = ADP + NADP(+) + H(+). Involved in the regulation of the intracellular balance of NAD and NADP, and is a key enzyme in the biosynthesis of NADP. Catalyzes specifically the phosphorylation on 2'-hydroxyl of the adenosine moiety of NAD to yield NADP. The sequence is that of NAD kinase from Clostridium tetani (strain Massachusetts / E88).